The following is a 144-amino-acid chain: Transcriptional regulator SlyA (144 aa).

In terms of domain architecture, HTH marR-type spans 2–135 (ESPLGSDLAR…LIKLIAKLEH (134 aa)). The H-T-H motif DNA-binding region spans 49-72 (QIQLAKAIGIEQPSLVRTLDQLEE).

Belongs to the SlyA family. Homodimer.

Transcription regulator that can specifically activate or repress expression of target genes. This Escherichia coli O127:H6 (strain E2348/69 / EPEC) protein is Transcriptional regulator SlyA.